A 210-amino-acid polypeptide reads, in one-letter code: Chaperone protein TorD (210 aa).

Belongs to the TorD/DmsD family. TorD subfamily.

It is found in the cytoplasm. Its function is as follows. Involved in the biogenesis of TorA. Acts on TorA before the insertion of the molybdenum cofactor and, as a result, probably favors a conformation of the apoenzyme that is competent for acquiring the cofactor. This chain is Chaperone protein TorD, found in Salmonella agona (strain SL483).